The chain runs to 237 residues: 4'-phosphopantetheinyl transferase HetI (237 aa).

Residues Asp128, Glu130, and Glu174 each coordinate Mg(2+).

The protein belongs to the P-Pant transferase superfamily. Gsp/Sfp/HetI/AcpT family. The cofactor is Mg(2+).

It carries out the reaction apo-[peptidyl-carrier protein] + CoA = holo-[peptidyl-carrier protein] + adenosine 3',5'-bisphosphate + H(+). Probably activates the acyl carrier protein (ACP) domain of HetM, by transferring the 4'-phosphopantetheinyl moiety of coenzyme A (CoA) to a serine residue. May be required for maintaining vegetative growth and probably acts via HetN to inhibit differentiation. The protein is 4'-phosphopantetheinyl transferase HetI (hetI) of Nostoc sp. (strain PCC 7120 / SAG 25.82 / UTEX 2576).